The primary structure comprises 173 residues: Crossover junction endodeoxyribonuclease RuvC (173 aa).

Residues Asp10, Glu71, and Asp143 contribute to the active site. Mg(2+)-binding residues include Asp10, Glu71, and Asp143.

This sequence belongs to the RuvC family. In terms of assembly, homodimer which binds Holliday junction (HJ) DNA. The HJ becomes 2-fold symmetrical on binding to RuvC with unstacked arms; it has a different conformation from HJ DNA in complex with RuvA. In the full resolvosome a probable DNA-RuvA(4)-RuvB(12)-RuvC(2) complex forms which resolves the HJ. It depends on Mg(2+) as a cofactor.

Its subcellular location is the cytoplasm. It carries out the reaction Endonucleolytic cleavage at a junction such as a reciprocal single-stranded crossover between two homologous DNA duplexes (Holliday junction).. The RuvA-RuvB-RuvC complex processes Holliday junction (HJ) DNA during genetic recombination and DNA repair. Endonuclease that resolves HJ intermediates. Cleaves cruciform DNA by making single-stranded nicks across the HJ at symmetrical positions within the homologous arms, yielding a 5'-phosphate and a 3'-hydroxyl group; requires a central core of homology in the junction. The consensus cleavage sequence is 5'-(A/T)TT(C/G)-3'. Cleavage occurs on the 3'-side of the TT dinucleotide at the point of strand exchange. HJ branch migration catalyzed by RuvA-RuvB allows RuvC to scan DNA until it finds its consensus sequence, where it cleaves and resolves the cruciform DNA. This chain is Crossover junction endodeoxyribonuclease RuvC, found in Gloeobacter violaceus (strain ATCC 29082 / PCC 7421).